We begin with the raw amino-acid sequence, 760 residues long: MENNNNEPAETVQEKGPKLKNDIDLNDQFKDEKEKKEEISSSSIENKNNNNNNTSTNNVIPNESNNNISNNNVISNENNNTNNNTDNNTDNNNNNNNNNNNNNEPVTSFTVNNKSLIEKEPTLFEFNQEQQIKYKNKSINSLIIKRSGIVIKISQKKSTIIYQDSIIACSELPDNFDTATTTTTTTTTLPIKVTLFTCVLKKKQLTIDKEQRKRKSYTFQFKSNQDSLNFYSNIQSTFLNSLPRGNPKNRKIRILINPKSGKKESHNIFKEVEQLFKDSGIKMKLTVTMEPEHAKKIGFKSNIYKYDTVVFISGDGLLHEFINGLLSREDYEDAKKIPLALIPAGTGNGLANSIGLQDPMSAALAILRGFTKPLDVCIVQQPTVTTIPVVDNNTVTTTTTTTSPTSASPTITSANNNNNNNNNNNNNNNNNNNNNNNNNNSNITKWCSILSLTWGLVSDVDIESEKYRSLGDLRLIIGAAVRILNLRIYRGKVYFLPAIPLDKSQMQSIPKCSFDCNICDSSNSVKVIEDLVCNDNDNNNKNKNEEQNEINSTTSNNNNNNNTTTTSTSSSTSTSTSTSSLTATTTTAKSTNSLSSSPRSDINMSSNSISKSLDIGTIPSCKVTHNSNLLNESSDSLLSKGWKCIEGEFIGVVASTVSHLASDFISSPNAHLSDGLIDLIFINNRSKLSKASLLSILTDSATGDHLKSDLIEHHKVKALILEPSIQKHGIVAIDGERIPYAKTSMENIRGCLNLICRSYH.

Positions 1–108 are disordered; the sequence is MENNNNEPAE…NNNNNEPVTS (108 aa). Positions 12 to 39 are enriched in basic and acidic residues; that stretch reads VQEKGPKLKNDIDLNDQFKDEKEKKEEI. Low complexity predominate over residues 40–106; sequence SSSSIENKNN…NNNNNNNEPV (67 aa). The region spanning 247 to 383 is the DAGKc domain; sequence PKNRKIRILI…LDVCIVQQPT (137 aa). ATP-binding positions include 257–259 and Thr288; that span reads NPK. 313-316 contributes to the substrate binding site; that stretch reads SGDG. Catalysis depends on Asp315, which acts as the Proton donor/acceptor. ATP contacts are provided by residues Glu320 and 345-347; that span reads GTG. A disordered region spans residues 394–438; it reads TVTTTTTTTSPTSASPTITSANNNNNNNNNNNNNNNNNNNNNNNN. Asp461 is a substrate binding site. ATP is bound by residues Arg468 and Arg474. Residues 535–605 are disordered; sequence DNDNNNKNKN…SSPRSDINMS (71 aa). Residues 549–597 are compositionally biased toward low complexity; the sequence is EINSTTSNNNNNNNTTTTSTSSSTSTSTSTSSLTATTTTAKSTNSLSSS. Residue 734–736 coordinates ATP; it reads DGE.

It catalyses the reaction a sphingoid base + ATP = a sphingoid 1-phosphate + ADP + H(+). Its activity is regulated as follows. Inhibited by N,N,-dimethylsphingosine. Catalyzes the phosphorylation of sphingosine to form sphingosine-1-phosphate (S1P), which probably acts intracellularly as a second messenger perhaps by promoting cell proliferation. This Dictyostelium discoideum (Social amoeba) protein is Sphingosine kinase B (sgkB).